The chain runs to 455 residues: Guanine/hypoxanthine permease GhxQ (455 aa).

Residues 1–31 are Cytoplasmic-facing; the sequence is MSGDILQTPDAPKPQGALDNYFKITARGSTV. The chain crosses the membrane as a helical span at residues 32–55; it reads RQEVLAGLTTFLAMVYSVIVVPGM. Residues 56–65 lie on the Periplasmic side of the membrane; that stretch reads LGKAGFPPAA. Residues 66–84 traverse the membrane as a helical segment; that stretch reads VFVATCLVAGFGSLLMGLW. Residues 85–86 are Cytoplasmic-facing; that stretch reads AN. Residues 87–103 traverse the membrane as a discontinuously helical segment; the sequence is LPMAIGCAISLTAFTAF. Residues 104–115 lie on the Periplasmic side of the membrane; it reads SLVLGQQISVPV. The helical transmembrane segment at 116–135 threads the bilayer; the sequence is ALGAVFLMGVIFTAISVTGV. Residues 136–147 lie on the Cytoplasmic side of the membrane; the sequence is RTWILRNLPMGI. A helical transmembrane segment spans residues 148–168; it reads AHGTGIGIGLFLLLIAANGVG. The Periplasmic segment spans residues 169–186; sequence MVIKNPIEGLPVALGAFT. A helical membrane pass occupies residues 187 to 204; the sequence is SFPVMMSLLGLAVIFGLE. Residues 205-208 are Cytoplasmic-facing; it reads KCRV. A helical transmembrane segment spans residues 209-228; that stretch reads PGGILLVIIAISIIGLIFDP. The Periplasmic portion of the chain corresponds to 229 to 260; it reads AVKYHGLVAMPSLTGEDGKSLIFSLDIMGALQ. Residues 261–289 traverse the membrane as a helical segment; that stretch reads PTVLPSVLALVMTAVFDATGTIRAVAGQA. Over 290–302 the chain is Cytoplasmic; sequence NLLDKDNQIINGG. The chain crosses the membrane as a helical span at residues 303–318; sequence KALTSDSVSSIFSGLV. Over 319–320 the chain is Periplasmic; it reads GA. A discontinuously helical transmembrane segment spans residues 321-336; that stretch reads APAAVYIESAAGTAAG. Topologically, residues 337–340 are cytoplasmic; that stretch reads GKTG. The helical transmembrane segment at 341–355 threads the bilayer; the sequence is LTATVVGALFLLILF. Residues 356–366 lie on the Periplasmic side of the membrane; sequence LSPLSFLIPGY. Residues 367–386 traverse the membrane as a helical segment; that stretch reads ATAPALMYVGLLMLSNVSKL. Over 387–391 the chain is Cytoplasmic; that stretch reads DFNDF. Residues 392–427 constitute an intramembrane region (discontinuously helical); it reads IDAMAGLVCAVFIVLTCNIVTGIMLGFVTLVVGRVF. At 428 to 455 the chain is on the cytoplasmic side; that stretch reads AREWQKLNIGTVIITAALVAFYAGGWAI.

It belongs to the nucleobase:cation symporter-2 (NCS2) (TC 2.A.40) family. Azg-like subfamily.

The protein localises to the cell membrane. High-affinity transporter for guanine and hypoxanthine. This Escherichia coli (strain K12) protein is Guanine/hypoxanthine permease GhxQ (ghxQ).